The following is a 157-amino-acid chain: Putative dehydration-responsive element-binding protein 2H (157 aa).

The Nuclear localization signal motif lies at 5 to 21; the sequence is RKSRGTRDVAEILRKWR. Residues 29–57 are disordered; that stretch reads ADSCIDGGGSKPIRKAPPKRSRKGCMKGK. A compositionally biased stretch (basic residues) spans 40–54; it reads PIRKAPPKRSRKGCM. Positions 66–123 form a DNA-binding region, AP2/ERF; that stretch reads DYTGVRQRTWGKWVAEIREPGRGAKLWLGTFSSSYEAALAYDEASKAIYGQSARLNLP.

It belongs to the AP2/ERF transcription factor family. ERF subfamily.

The protein localises to the nucleus. In terms of biological role, putative transcriptional activator that binds specifically to the DNA sequence 5'-[AG]CCGAC-3'. The sequence is that of Putative dehydration-responsive element-binding protein 2H (DREB2H) from Arabidopsis thaliana (Mouse-ear cress).